We begin with the raw amino-acid sequence, 222 residues long: MTVPVITIDGPSASGKGTVAAQVAARLAFHYLDSGSLYRLLALHARRRGIAWDDEPALARAAAALPVEFSDGAVWLEGNDASQDIRAEEIGIGASKVGALPAVRAALLQRQRDFCEAPGLVTDGRDMGSVVFPDATLKIFLTASAEERASRRHKQLIGKGESANLAQIMQDIIDRDARDAARPVAPLRQEPDAFLLDTTELTIDQAVDKVLEWFEEKQASGH.

An ATP-binding site is contributed by 10–18 (GPSASGKGT).

This sequence belongs to the cytidylate kinase family. Type 1 subfamily.

The protein localises to the cytoplasm. The catalysed reaction is CMP + ATP = CDP + ADP. The enzyme catalyses dCMP + ATP = dCDP + ADP. The chain is Cytidylate kinase from Chromobacterium violaceum (strain ATCC 12472 / DSM 30191 / JCM 1249 / CCUG 213 / NBRC 12614 / NCIMB 9131 / NCTC 9757 / MK).